The chain runs to 117 residues: Ribosome-binding factor A (117 aa).

It belongs to the RbfA family. In terms of assembly, monomer. Binds 30S ribosomal subunits, but not 50S ribosomal subunits or 70S ribosomes.

The protein resides in the cytoplasm. Its function is as follows. One of several proteins that assist in the late maturation steps of the functional core of the 30S ribosomal subunit. Associates with free 30S ribosomal subunits (but not with 30S subunits that are part of 70S ribosomes or polysomes). Required for efficient processing of 16S rRNA. May interact with the 5'-terminal helix region of 16S rRNA. This is Ribosome-binding factor A from Lacticaseibacillus casei (strain BL23) (Lactobacillus casei).